Consider the following 330-residue polypeptide: Aspartate--ammonia ligase (330 aa).

It belongs to the class-II aminoacyl-tRNA synthetase family. AsnA subfamily.

It is found in the cytoplasm. It carries out the reaction L-aspartate + NH4(+) + ATP = L-asparagine + AMP + diphosphate + H(+). It functions in the pathway amino-acid biosynthesis; L-asparagine biosynthesis; L-asparagine from L-aspartate (ammonia route): step 1/1. The sequence is that of Aspartate--ammonia ligase from Haemophilus ducreyi (strain 35000HP / ATCC 700724).